Reading from the N-terminus, the 27-residue chain is uncharacterized protein (27 aa).

The chain crosses the membrane as a helical span at residues I3 to F23.

The protein resides in the cell inner membrane. This is an uncharacterized protein from Escherichia coli (strain K12).